The following is a 515-amino-acid chain: Gap junction alpha-9 protein (515 aa).

Over 1–19 the chain is Cytoplasmic; sequence MGDWNLLGDTLEEVHIHST. The helical transmembrane segment at 20–40 threads the bilayer; that stretch reads MIGKIWLTILFIFRMLVLGVA. The Extracellular portion of the chain corresponds to 41-77; the sequence is AEDVWNDEQSGFICNTEQPGCRNVCYDQAFPISLIRY. A helical membrane pass occupies residues 78–98; it reads WVLQVIFVSSPSLVYMGHALY. At 99 to 166 the chain is on the cytoplasmic side; the sequence is RLRVLEEERQ…YVIHIFTRSV (68 aa). Residues 167-187 form a helical membrane-spanning segment; the sequence is VEVGFMIGQYLLYGFHLEPLF. Residues 188–209 are Extracellular-facing; the sequence is KCHGHPCPNIIDCFVSRPTEKT. Residues 210 to 230 traverse the membrane as a helical segment; sequence IFLLFMQSIATISLFLNILEI. The Cytoplasmic portion of the chain corresponds to 231 to 515; the sequence is FHLGFKKIKR…GRRVPTDLQI (285 aa). Basic and acidic residues predominate over residues 370–380; the sequence is KRETEGKDSKR. Disordered stretches follow at residues 370 to 400 and 428 to 472; these read KRET…GENN and SSTE…NTAD. The segment covering 456–472 has biased composition (polar residues); that stretch reads PPSQGDSQSLDIPNTAD.

Belongs to the connexin family. Alpha-type (group II) subfamily. A connexon is composed of a hexamer of connexins. As to expression, highly abundant in skeletal muscle. Also detected in testis.

It is found in the cell membrane. The protein resides in the cell junction. The protein localises to the gap junction. One gap junction consists of a cluster of closely packed pairs of transmembrane channels, the connexons, through which materials of low MW diffuse from one cell to a neighboring cell. The sequence is that of Gap junction alpha-9 protein (GJA9) from Homo sapiens (Human).